The chain runs to 215 residues: HTH-type transcriptional repressor FabR (215 aa).

The HTH tetR-type domain occupies 10–70; sequence KTRRSLVEAA…TMVDESGLML (61 aa). Positions 33–52 form a DNA-binding region, H-T-H motif; sequence SLREVAREAGIAPTSFYRHF.

Homodimer.

The protein localises to the cytoplasm. Functionally, represses the transcription of fabB, involved in unsaturated fatty acid (UFA) biosynthesis. By controlling UFA production, FabR directly influences the physical properties of the membrane bilayer. The chain is HTH-type transcriptional repressor FabR from Escherichia coli O139:H28 (strain E24377A / ETEC).